Here is a 440-residue protein sequence, read N- to C-terminus: Proline--tRNA ligase (440 aa).

This sequence belongs to the class-II aminoacyl-tRNA synthetase family. ProS type 2 subfamily. Homodimer.

It is found in the cytoplasm. It catalyses the reaction tRNA(Pro) + L-proline + ATP = L-prolyl-tRNA(Pro) + AMP + diphosphate. Its function is as follows. Catalyzes the attachment of proline to tRNA(Pro) in a two-step reaction: proline is first activated by ATP to form Pro-AMP and then transferred to the acceptor end of tRNA(Pro). This Methylocella silvestris (strain DSM 15510 / CIP 108128 / LMG 27833 / NCIMB 13906 / BL2) protein is Proline--tRNA ligase.